The chain runs to 380 residues: Cytochrome b (380 aa).

4 helical membrane-spanning segments follow: residues 33-53 (FGSLLGLCLITQILTGLFLAM), 77-98 (WLIRNIHANGASFFFICIYLHI), 113-133 (WNVGVILLLLVMMTAFVGYVL), and 178-198 (FFAFHFLFPFVIAAATVIHLI). Heme b is bound by residues His-83 and His-97. Residues His-182 and His-196 each coordinate heme b. His-201 is an a ubiquinone binding site. Transmembrane regions (helical) follow at residues 226-246 (YKDLLGFAALLIALAALALFS), 288-308 (LGGVLALLFSILILMLVPILH), 320-340 (FSQFLFWSLVADVMILTWIGG), and 347-367 (FVIIGQVASFLYFFLFLVMIP).

The protein belongs to the cytochrome b family. In terms of assembly, the cytochrome bc1 complex contains 3 respiratory subunits (MT-CYB, CYC1 and UQCRFS1), 2 core proteins (UQCRC1 and UQCRC2) and probably 6 low-molecular weight proteins. Requires heme b as cofactor.

Its subcellular location is the mitochondrion inner membrane. In terms of biological role, component of the ubiquinol-cytochrome c reductase complex (complex III or cytochrome b-c1 complex) that is part of the mitochondrial respiratory chain. The b-c1 complex mediates electron transfer from ubiquinol to cytochrome c. Contributes to the generation of a proton gradient across the mitochondrial membrane that is then used for ATP synthesis. The protein is Cytochrome b (mt-cyb) of Paralichthys olivaceus (Bastard halibut).